A 362-amino-acid polypeptide reads, in one-letter code: Putative F-box protein At3g23260 (362 aa).

The F-box domain maps to 1 to 46 (MEWRSLPVELQEEILSRVPAKYLARLRSTSKQWNALSKTGSFAKKH).

The chain is Putative F-box protein At3g23260 from Arabidopsis thaliana (Mouse-ear cress).